The sequence spans 459 residues: MAPTQNTICSKHVAVIGAGAAGLVTARELRREGHTVVVFDREKQVGGLWNYSSKADSDPLSLDTTRTIVHTSIYESLRTNLPRECMGFTDFPFVPRIHDISRDSRRYPSHREVLAYLQDFAREFKIEEMVRFETEVVCVEPVNGKWSVRSKNSVGFAAHEIFDAVVVCSGHFTEPNVAHIPGIKSWPGKQIHSHNYRVPGPFNNEVVVVIGNYASGADISRDIAKVAKEVHIASRASESDTYQKLPVPQNNLWVHSEIDFAHQDGSILFKNGKVVYADTIVHCTGYKYYFPFLETNGYININENRVEPLYKHVFLPALAPSLSFIGLPGMAIQFVMFEIQSKWVAAVLSGRVILPSQDKMMEDIIEWYATLDVLGIPKRHTHKLGKISCEYLNWIAEECHCSPVENWRIQEVERGFQRMVSHPEIYRDEWDDDDLMEEAYKDFARKKLISSHPSYFLES.

17–22 (GAGAAG) contacts FAD. 211 to 216 (GNYASG) provides a ligand contact to NADP(+).

Belongs to the FMO family. FAD serves as cofactor. In terms of tissue distribution, mainly expressed in leaves. Low levels in flowers and seeds.

It carries out the reaction a (Z)-omega-(methylsulfanyl)-N-sulfo-alkylhydroximate S-glucoside + NADPH + O2 + H(+) = a (Z)-omega-(methylsulfinyl)-alkyl-glucosinolate + NADP(+) + H2O. Its function is as follows. Catalyzes the conversion of methylthioalkyl glucosinolates into methylsulfinylalkyl glucosinolates. Able to S-oxygenate both desulfo- and intact 4-methylthiobutyl glucosinolates, but no activity with methionine, dihomomethionine or 5-methylthiopentaldoxime. This is Flavin-containing monooxygenase FMO GS-OX1 (FMOGS-OX1) from Arabidopsis thaliana (Mouse-ear cress).